A 462-amino-acid chain; its full sequence is UDP-N-acetylmuramate--L-alanine ligase (462 aa).

116–122 (GAHGKTT) is a binding site for ATP.

Belongs to the MurCDEF family.

It localises to the cytoplasm. It carries out the reaction UDP-N-acetyl-alpha-D-muramate + L-alanine + ATP = UDP-N-acetyl-alpha-D-muramoyl-L-alanine + ADP + phosphate + H(+). It participates in cell wall biogenesis; peptidoglycan biosynthesis. Its function is as follows. Cell wall formation. The polypeptide is UDP-N-acetylmuramate--L-alanine ligase (Desulforamulus reducens (strain ATCC BAA-1160 / DSM 100696 / MI-1) (Desulfotomaculum reducens)).